The chain runs to 479 residues: Adenosylhomocysteinase (479 aa).

Positions 65, 145, and 205 each coordinate substrate. NAD(+) is bound at residue 206-208 (TTT). Substrate contacts are provided by lysine 235 and aspartate 239. NAD(+)-binding positions include asparagine 240, 269 to 274 (GYGDVG), glutamate 292, asparagine 327, 348 to 350 (IGH), and asparagine 393.

The protein belongs to the adenosylhomocysteinase family. The cofactor is NAD(+).

The protein localises to the cytoplasm. The catalysed reaction is S-adenosyl-L-homocysteine + H2O = L-homocysteine + adenosine. It functions in the pathway amino-acid biosynthesis; L-homocysteine biosynthesis; L-homocysteine from S-adenosyl-L-homocysteine: step 1/1. In terms of biological role, may play a key role in the regulation of the intracellular concentration of adenosylhomocysteine. The protein is Adenosylhomocysteinase of Janthinobacterium sp. (strain Marseille) (Minibacterium massiliensis).